Here is a 446-residue protein sequence, read N- to C-terminus: Probable D-serine dehydratase (446 aa).

At K116 the chain carries N6-(pyridoxal phosphate)lysine.

Belongs to the serine/threonine dehydratase family. DsdA subfamily. It depends on pyridoxal 5'-phosphate as a cofactor.

The enzyme catalyses D-serine = pyruvate + NH4(+). This is Probable D-serine dehydratase from Bacillus cereus (strain 03BB102).